The primary structure comprises 630 residues: MFDAGDRGGGGGVVAVKRMKLCEEEEEEEEGMEVDEEEEEVGWVWRPPGGLAGEDEAAAWEGRAAAIVVSDAVEVDFPVIYVNAAFEAATGYRADEVLGRNCRFLQFRDPRAQRRHPLVDPMVVSEIRRCLNEGIEFQGELLNFRKDGAPLYNRLRLIPMHGDDGFVTHVIGIQLFSEANIDLSNVSYPVYKQQSNHRPNIQEINPASHEHIPKIQSSEYCCILQLSDEVLAHNILSRLSPRDVASIGSVCTRMHELTKNDHLRKMVCQNAWGRDVTVRLEMSTKMLGWGRLARELTTLEAASWRKFTVGGRVEPSRCNFSACAVGNRLVLFGGEGVNMQPMDDTFVLNLESAKPEWRRVKVSASPPGRWGHTLSWLNGSWLVVFGGCGQQGLLNDVFVLDLDAKQPTWREVASEGPPLPRSWHSSCTLDGSKLVVSGGCTESGVLLSDTFLLDLTKEKPAWKEIPTSWSPPSRLGHTLSVFGKTKLFMFGGLAKSGSLRLRSCDAYTMDAGEDSPQWRQLATTGFPSIGPPPRLDHVAVSLPCGRIIIFGGSIAGLHSPSQLFLLDPAEEKPTWRILNVPGQPPKFAWGHSTCVVGGTRVLVLGGHTGEEWILNELHELCLASRPDEDE.

The region spanning 54–126 (EDEAAAWEGR…PLVDPMVVSE (73 aa)) is the PAS domain. Cys-102 is modified (S-4a-FMN cysteine). Positions 220-268 (YCCILQLSDEVLAHNILSRLSPRDVASIGSVCTRMHELTKNDHLRKMVC) constitute an F-box domain. Kelch repeat units follow at residues 380-430 (SWLV…CTLD), 432-483 (SKLV…SVFG), 485-537 (TKLF…RLDH), 545-597 (GRII…CVVG), and 599-629 (TRVL…PDED).

The protein belongs to the ADAGIO family. In terms of processing, FMN binds covalently to cysteine after exposure to blue light and is reversed in the dark.

It localises to the nucleus. Its pathway is protein modification; protein ubiquitination. Component of an E3 ubiquitin ligase complex that plays a central role in blue light-dependent circadian cycles. Acts as a blue light photoreceptor, due to the presence of FMN, that mediates light-regulated protein degradation of critical clock components by targeting them to the proteasome complex. The SCF(ADO3) E3 ubiquitin ligase complex is involved in the regulation of circadian clock-dependent processes including transition to flowering time, hypocotyl elongation, cotyledons and leaf movement rhythms. The sequence is that of Adagio-like protein 3 from Oryza sativa subsp. japonica (Rice).